The sequence spans 532 residues: Probable cytochrome c oxidase subunit 1 (532 aa).

8 helical membrane-spanning segments follow: residues 33-53, 74-94, 95-115, 118-138, 163-183, 200-220, 252-272, and 284-304; these read IMYI…SLLF, VLIT…ALFG, GFGN…FPRL, ISFW…FVDG, MAIF…INLI, PLFV…MPVL, LFWF…FGIV, and IFGY…GFIV. Residue histidine 79 participates in Fe(II)-heme a binding. The Cu cation site is built by histidine 258 and tyrosine 262. Residues histidine 307 and histidine 308 each coordinate Cu cation. 2 helical membrane passes run 318 to 338 and 355 to 375; these read ALIY…IKIF and MLFS…GIIL. Histidine 393 is a binding site for heme a3. The next 3 membrane-spanning stretches (helical) occupy residues 394–414, 431–451, and 473–493; these read FHYT…YYWF, FWIT…LGLA, and IGAG…FYTL. Histidine 395 contributes to the Fe(II)-heme a binding site.

Belongs to the heme-copper respiratory oxidase family.

It is found in the cell membrane. It carries out the reaction 4 Fe(II)-[cytochrome c] + O2 + 8 H(+)(in) = 4 Fe(III)-[cytochrome c] + 2 H2O + 4 H(+)(out). Its pathway is energy metabolism; oxidative phosphorylation. Its function is as follows. Cytochrome c oxidase is the component of the respiratory chain that catalyzes the reduction of oxygen to water. Subunits 1-3 form the functional core of the enzyme complex. CO I is the catalytic subunit of the enzyme. Electrons originating in cytochrome c are transferred via the copper A center of subunit 2 and heme A of subunit 1 to the bimetallic center formed by heme A3 and copper B. In Rickettsia felis (strain ATCC VR-1525 / URRWXCal2) (Rickettsia azadi), this protein is Probable cytochrome c oxidase subunit 1 (ctaD).